The primary structure comprises 557 residues: Formate--tetrahydrofolate ligase (557 aa).

Threonine 65–threonine 72 contributes to the ATP binding site.

It belongs to the formate--tetrahydrofolate ligase family.

It carries out the reaction (6S)-5,6,7,8-tetrahydrofolate + formate + ATP = (6R)-10-formyltetrahydrofolate + ADP + phosphate. It functions in the pathway one-carbon metabolism; tetrahydrofolate interconversion. This chain is Formate--tetrahydrofolate ligase, found in Acidiphilium cryptum (strain JF-5).